The chain runs to 483 residues: Proline--tRNA ligase (483 aa).

Belongs to the class-II aminoacyl-tRNA synthetase family. ProS type 3 subfamily. As to quaternary structure, homodimer.

The protein localises to the cytoplasm. It catalyses the reaction tRNA(Pro) + L-proline + ATP = L-prolyl-tRNA(Pro) + AMP + diphosphate. Functionally, catalyzes the attachment of proline to tRNA(Pro) in a two-step reaction: proline is first activated by ATP to form Pro-AMP and then transferred to the acceptor end of tRNA(Pro). The chain is Proline--tRNA ligase from Natranaerobius thermophilus (strain ATCC BAA-1301 / DSM 18059 / JW/NM-WN-LF).